A 159-amino-acid chain; its full sequence is MSATDPIQRVETLLQPILDAMGLELVELEFKKVGRSYLLRVFIDKPDGVNLDDCAEVSRELSVQLDVEDCIASRYTLEVSSPGLDRPLKKEQDFIRYQGRLAVVKTTELLKDEKGSPRKTFLGFLEGVEDGEVMIRLKEGPQARIPWDKIAKAHLEFEF.

This sequence belongs to the RimP family.

The protein localises to the cytoplasm. Its function is as follows. Required for maturation of 30S ribosomal subunits. This chain is Ribosome maturation factor RimP, found in Trichlorobacter lovleyi (strain ATCC BAA-1151 / DSM 17278 / SZ) (Geobacter lovleyi).